The primary structure comprises 129 residues: Translation initiation factor 5A (129 aa).

Position 36 is a hypusine (Lys36).

The protein belongs to the eIF-5A family.

It is found in the cytoplasm. In terms of biological role, functions by promoting the formation of the first peptide bond. This is Translation initiation factor 5A (eif5a) from Thermoplasma acidophilum (strain ATCC 25905 / DSM 1728 / JCM 9062 / NBRC 15155 / AMRC-C165).